Here is a 180-residue protein sequence, read N- to C-terminus: ATP synthase subunit delta (180 aa).

This sequence belongs to the ATPase delta chain family. As to quaternary structure, F-type ATPases have 2 components, F(1) - the catalytic core - and F(0) - the membrane proton channel. F(1) has five subunits: alpha(3), beta(3), gamma(1), delta(1), epsilon(1). F(0) has three main subunits: a(1), b(2) and c(10-14). The alpha and beta chains form an alternating ring which encloses part of the gamma chain. F(1) is attached to F(0) by a central stalk formed by the gamma and epsilon chains, while a peripheral stalk is formed by the delta and b chains.

The protein resides in the cell membrane. Functionally, f(1)F(0) ATP synthase produces ATP from ADP in the presence of a proton or sodium gradient. F-type ATPases consist of two structural domains, F(1) containing the extramembraneous catalytic core and F(0) containing the membrane proton channel, linked together by a central stalk and a peripheral stalk. During catalysis, ATP synthesis in the catalytic domain of F(1) is coupled via a rotary mechanism of the central stalk subunits to proton translocation. This protein is part of the stalk that links CF(0) to CF(1). It either transmits conformational changes from CF(0) to CF(1) or is implicated in proton conduction. This is ATP synthase subunit delta from Ligilactobacillus salivarius (strain UCC118) (Lactobacillus salivarius).